A 122-amino-acid polypeptide reads, in one-letter code: Basic phospholipase A2 homolog ecarpholin S (122 aa).

7 disulfide bridges follow: Cys-26–Cys-115, Cys-28–Cys-44, Cys-43–Cys-95, Cys-49–Cys-122, Cys-50–Cys-88, Cys-57–Cys-81, and Cys-75–Cys-86. Residues 105 to 117 (KKYTYYPNFWCKG) form an important for membrane-damaging activities in eukaryotes and bacteria; heparin-binding region.

In terms of tissue distribution, expressed by the venom gland.

The protein resides in the secreted. With respect to regulation, suramin inhibits the myotoxic activity. Snake venom phospholipase A2 homolog that lacks enzymatic activity. Shows high myotoxin activities and displays edema-inducing activities. The sequence is that of Basic phospholipase A2 homolog ecarpholin S from Echis carinatus (Saw-scaled viper).